Reading from the N-terminus, the 258-residue chain is Phosphoribosylformylglycinamidine synthase subunit PurQ (258 aa).

A Glutamine amidotransferase type-1 domain is found at 7–238; it reads IGILLMEGTN…QAMYLETEKD (232 aa). C97 serves as the catalytic Nucleophile. Active-site residues include H220 and E222.

Part of the FGAM synthase complex composed of 1 PurL, 1 PurQ and 2 PurS subunits.

It is found in the cytoplasm. The enzyme catalyses N(2)-formyl-N(1)-(5-phospho-beta-D-ribosyl)glycinamide + L-glutamine + ATP + H2O = 2-formamido-N(1)-(5-O-phospho-beta-D-ribosyl)acetamidine + L-glutamate + ADP + phosphate + H(+). It carries out the reaction L-glutamine + H2O = L-glutamate + NH4(+). Its pathway is purine metabolism; IMP biosynthesis via de novo pathway; 5-amino-1-(5-phospho-D-ribosyl)imidazole from N(2)-formyl-N(1)-(5-phospho-D-ribosyl)glycinamide: step 1/2. In terms of biological role, part of the phosphoribosylformylglycinamidine synthase complex involved in the purines biosynthetic pathway. Catalyzes the ATP-dependent conversion of formylglycinamide ribonucleotide (FGAR) and glutamine to yield formylglycinamidine ribonucleotide (FGAM) and glutamate. The FGAM synthase complex is composed of three subunits. PurQ produces an ammonia molecule by converting glutamine to glutamate. PurL transfers the ammonia molecule to FGAR to form FGAM in an ATP-dependent manner. PurS interacts with PurQ and PurL and is thought to assist in the transfer of the ammonia molecule from PurQ to PurL. This chain is Phosphoribosylformylglycinamidine synthase subunit PurQ, found in Thermoplasma volcanium (strain ATCC 51530 / DSM 4299 / JCM 9571 / NBRC 15438 / GSS1).